A 107-amino-acid chain; its full sequence is Nucleoid-associated protein RP866 (107 aa).

This sequence belongs to the YbaB/EbfC family. In terms of assembly, homodimer.

The protein localises to the cytoplasm. It localises to the nucleoid. In terms of biological role, binds to DNA and alters its conformation. May be involved in regulation of gene expression, nucleoid organization and DNA protection. The protein is Nucleoid-associated protein RP866 of Rickettsia prowazekii (strain Madrid E).